Reading from the N-terminus, the 284-residue chain is 4-diphosphocytidyl-2-C-methyl-D-erythritol kinase (284 aa).

The active site involves Lys13. Position 96–106 (96–106 (PMGGGLGGGSS)) interacts with ATP. The active site involves Asp138.

The protein belongs to the GHMP kinase family. IspE subfamily.

It catalyses the reaction 4-CDP-2-C-methyl-D-erythritol + ATP = 4-CDP-2-C-methyl-D-erythritol 2-phosphate + ADP + H(+). Its pathway is isoprenoid biosynthesis; isopentenyl diphosphate biosynthesis via DXP pathway; isopentenyl diphosphate from 1-deoxy-D-xylulose 5-phosphate: step 3/6. Catalyzes the phosphorylation of the position 2 hydroxy group of 4-diphosphocytidyl-2C-methyl-D-erythritol. In Chromobacterium violaceum (strain ATCC 12472 / DSM 30191 / JCM 1249 / CCUG 213 / NBRC 12614 / NCIMB 9131 / NCTC 9757 / MK), this protein is 4-diphosphocytidyl-2-C-methyl-D-erythritol kinase.